A 136-amino-acid chain; its full sequence is Small ribosomal subunit protein bS6 (136 aa).

Basic and acidic residues predominate over residues 117–130; the sequence is EERSRSSRRQREDV. The tract at residues 117 to 136 is disordered; that stretch reads EERSRSSRRQREDVIEGVEL.

It belongs to the bacterial ribosomal protein bS6 family.

Functionally, binds together with bS18 to 16S ribosomal RNA. This is Small ribosomal subunit protein bS6 from Bartonella quintana (strain Toulouse) (Rochalimaea quintana).